The primary structure comprises 223 residues: Probable 3-beta-hydroxysteroid-Delta(8),Delta(7)-isomerase (223 aa).

4 helical membrane passes run 28-48 (IVSI…LLFG), 58-78 (LMCW…YFVF), 115-135 (VEGI…YAIA), and 175-195 (FYYY…PSLI). An EXPERA domain is found at 54 to 196 (LDKLLMCWWT…WWVLIPSLIS (143 aa)).

The protein belongs to the EBP family.

The protein resides in the endoplasmic reticulum membrane. The enzyme catalyses lathosterol = 5alpha-cholest-8-en-3beta-ol. It functions in the pathway steroid biosynthesis; sterol biosynthesis. Its function is as follows. Catalyzes the conversion of Delta(8)-sterols to their corresponding Delta(7)-isomers. The sequence is that of Probable 3-beta-hydroxysteroid-Delta(8),Delta(7)-isomerase from Arabidopsis thaliana (Mouse-ear cress).